The following is a 430-amino-acid chain: C4-dicarboxylate transport protein (430 aa).

8 helical membrane-spanning segments follow: residues 9–29 (VLYV…HFYP), 45–65 (LIKM…IAGM), 79–99 (LLYF…ATHL), 149–169 (GEIL…AHLG), 185–205 (VLFG…FGAM), 223–243 (LIGT…GAIA), 308–328 (IYMT…LTWM), and 356–376 (AATL…ILGI).

It belongs to the dicarboxylate/amino acid:cation symporter (DAACS) (TC 2.A.23) family.

Its subcellular location is the cell inner membrane. In terms of biological role, responsible for the transport of dicarboxylates such as succinate, fumarate, and malate from the periplasm across the membrane. In Burkholderia orbicola (strain AU 1054), this protein is C4-dicarboxylate transport protein.